The chain runs to 467 residues: Ankyrin repeat and SOCS box protein 10 (467 aa).

ANK repeat units follow at residues 115–144 (ELTT…RPDS), 147–176 (GGRT…DPNI), 180–209 (DGKR…RVDG), 214–243 (EEET…CPDA), 247–289 (EGWT…DADA), 293–322 (DKQR…SANT), and 326–361 (GGHT…AVRV). The SOCS box domain maps to 412-464 (YSSLFALVRQPRSLQHLSRCALRSHLEGSLPQALPRLPLPPRLLRYLQLDFEG).

The protein belongs to the ankyrin SOCS box (ASB) family. Expressed in the eye. The highest expression is observed in the iris, with moderate levels in the trabecular meshwork (TM), the lamina, and the optic nerve; slightly lower levels in the ciliary body, retina, and choroid; and very low levels in the lens.

The protein localises to the cytoplasm. The protein resides in the nucleus. The protein operates within protein modification; protein ubiquitination. Functionally, may be a substrate-recognition component of a SCF-like ECS (Elongin-Cullin-SOCS-box protein) E3 ubiquitin-protein ligase complex which mediates the ubiquitination and subsequent proteasomal degradation of target proteins. The polypeptide is Ankyrin repeat and SOCS box protein 10 (ASB10) (Homo sapiens (Human)).